The primary structure comprises 186 residues: Peptidyl-tRNA hydrolase (186 aa).

Tyr14 is a binding site for tRNA. The Proton acceptor role is filled by His19. Residues Tyr61, Asn63, and Asn107 each coordinate tRNA.

The protein belongs to the PTH family. Monomer.

It is found in the cytoplasm. The catalysed reaction is an N-acyl-L-alpha-aminoacyl-tRNA + H2O = an N-acyl-L-amino acid + a tRNA + H(+). Its function is as follows. Hydrolyzes ribosome-free peptidyl-tRNAs (with 1 or more amino acids incorporated), which drop off the ribosome during protein synthesis, or as a result of ribosome stalling. Functionally, catalyzes the release of premature peptidyl moieties from peptidyl-tRNA molecules trapped in stalled 50S ribosomal subunits, and thus maintains levels of free tRNAs and 50S ribosomes. The chain is Peptidyl-tRNA hydrolase from Helicobacter pylori (strain Shi470).